The sequence spans 963 residues: Reversion-inducing cysteine-rich protein with Kazal motifs (963 aa).

Positions 1–28 (MAAAVAAWPWALFCLAAVPPLLSPGAAG) are cleaved as a signal peptide. Residues 31 to 78 (CCYHAKDNLMCRDVCEQILSSKSDSRLKHLLQRAPEYCPESMGEVWGC) form a Knot 1 repeat. A 5 X Knot repeats region spans residues 31–332 (CCYHAKDNLM…NAVEVSMLTC (302 aa)). An N-linked (GlcNAc...) asparagine glycan is attached at N80. Knot repeat units lie at residues 98–135 (CCEL…LFSC) and 145–191 (CCSY…LIHC). An N-linked (GlcNAc...) asparagine glycan is attached at N194. Knot repeat units lie at residues 210–257 (CCDR…LWQC) and 286–332 (CCSK…MLTC). N-linked (GlcNAc...) asparagine glycosylation is found at N291 and N346. Kazal-like domains lie at 621-667 (KFTG…SCIS), 692-746 (SFGK…PCQP), and 749-783 (KSVE…HCQA). Cystine bridges form between C627–C652, C629–C648, C637–C665, C710–C729, C718–C744, and C755–C781. S936 carries the GPI-anchor amidated serine lipid modification. A propeptide spanning residues 937-963 (PSVKVGPVLHCLFISFSFTLLKLMDYI) is cleaved from the precursor.

It belongs to the RECK family. Interacts (via knot repeats) with WNT7A (via disordered linker region); the interaction is direct. Interacts (via knot repeats) with WNT7B (via disordered linker region); the interaction is direct. Interacts with ADGRA2; the interaction is direct. Localizes to the plasma membrane via its GPI-anchor. Released from the plasma membrane following cleavage of the GPI-anchor by GDPD5/GPE2.

It localises to the cell membrane. Functions together with ADGRA2 to enable brain endothelial cells to selectively respond to Wnt7 signals (WNT7A or WNT7B). Plays a key role in Wnt7-specific responses: required for central nervous system (CNS) angiogenesis and blood-brain barrier regulation. Acts as a Wnt7-specific coactivator of canonical Wnt signaling by decoding Wnt ligands: acts by interacting specifically with the disordered linker region of Wnt7, thereby conferring ligand selectivity for Wnt7. ADGRA2 is then required to deliver RECK-bound Wnt7 to frizzled by assembling a higher-order RECK-ADGRA2-Fzd-LRP5-LRP6 complex. Also acts as a serine protease inhibitor. The sequence is that of Reversion-inducing cysteine-rich protein with Kazal motifs from Gallus gallus (Chicken).